Here is a 236-residue protein sequence, read N- to C-terminus: Phosphoribosylaminoimidazole-succinocarboxamide synthase (236 aa).

Belongs to the SAICAR synthetase family.

It catalyses the reaction 5-amino-1-(5-phospho-D-ribosyl)imidazole-4-carboxylate + L-aspartate + ATP = (2S)-2-[5-amino-1-(5-phospho-beta-D-ribosyl)imidazole-4-carboxamido]succinate + ADP + phosphate + 2 H(+). The protein operates within purine metabolism; IMP biosynthesis via de novo pathway; 5-amino-1-(5-phospho-D-ribosyl)imidazole-4-carboxamide from 5-amino-1-(5-phospho-D-ribosyl)imidazole-4-carboxylate: step 1/2. The chain is Phosphoribosylaminoimidazole-succinocarboxamide synthase from Streptococcus equi subsp. zooepidemicus (strain MGCS10565).